The sequence spans 296 residues: Claudin-23 (296 aa).

Over 1–2 (MR) the chain is Cytoplasmic. The chain crosses the membrane as a helical span at residues 3–23 (TPVVMTLGMVLTPCGLLLNLV). Residues 24 to 81 (STLAPGWRLVKGFLDQPVDVVLYQGLWDICREQSSRERECGQPDEWNYFQTQPVQVAR) are Extracellular-facing. The helical transmembrane segment at 82–102 (GLMITSLATTALGLLLASLGV) threads the bilayer. The Cytoplasmic segment spans residues 103–111 (RCWQDEPHY). The chain crosses the membrane as a helical span at residues 112 to 132 (GLAGLSGVVFFVAGLFSLIPV). Topologically, residues 133–160 (SWYNHFLSDPDVLAAPSSPVTVQVSYSL) are extracellular. Residues 161-181 (VLGYLGSCLLLLGGFSLALSF) form a helical membrane-spanning segment. Topologically, residues 182-296 (APWCEERCRR…QNSLPCDSDL (115 aa)) are cytoplasmic. Residues 224–296 (YSDGQHRPPP…QNSLPCDSDL (73 aa)) are disordered. Residues 273 to 284 (TSQGGSSSRSTR) are compositionally biased toward low complexity. Polar residues predominate over residues 285 to 296 (PCQNSLPCDSDL).

The protein belongs to the claudin family.

The protein resides in the cell junction. It localises to the tight junction. Its subcellular location is the cell membrane. Its function is as follows. Plays a major role in tight junction-specific obliteration of the intercellular space, through calcium-independent cell-adhesion activity. This chain is Claudin-23 (Cldn23), found in Mus musculus (Mouse).